The sequence spans 747 residues: Ion-translocating oxidoreductase complex subunit C (747 aa).

4Fe-4S ferredoxin-type domains lie at 368 to 397 (MEPVAEEQSCIRCSQCADACPAGLLPQQLY) and 407 to 436 (KARNHHLFDCIECGACAYVCPSNIPLVQYY). [4Fe-4S] cluster is bound by residues C377, C380, C383, C387, C416, C419, C422, and C426. Residues 538 to 564 (VREERARENQTQQETPTVDVPSTELDD) form a disordered region.

Belongs to the 4Fe4S bacterial-type ferredoxin family. RnfC subfamily. The complex is composed of six subunits: RnfA, RnfB, RnfC, RnfD, RnfE and RnfG. [4Fe-4S] cluster is required as a cofactor.

It localises to the cell inner membrane. In terms of biological role, part of a membrane-bound complex that couples electron transfer with translocation of ions across the membrane. This Pectobacterium carotovorum subsp. carotovorum (strain PC1) protein is Ion-translocating oxidoreductase complex subunit C.